Consider the following 119-residue polypeptide: Ribonuclease P protein component (119 aa).

Belongs to the RnpA family. As to quaternary structure, consists of a catalytic RNA component (M1 or rnpB) and a protein subunit.

The enzyme catalyses Endonucleolytic cleavage of RNA, removing 5'-extranucleotides from tRNA precursor.. Functionally, RNaseP catalyzes the removal of the 5'-leader sequence from pre-tRNA to produce the mature 5'-terminus. It can also cleave other RNA substrates such as 4.5S RNA. The protein component plays an auxiliary but essential role in vivo by binding to the 5'-leader sequence and broadening the substrate specificity of the ribozyme. The polypeptide is Ribonuclease P protein component (Chlamydia muridarum (strain MoPn / Nigg)).